The chain runs to 161 residues: Phosphopantetheine adenylyltransferase (161 aa).

This sequence belongs to the eukaryotic CoaD family.

It is found in the cytoplasm. The enzyme catalyses (R)-4'-phosphopantetheine + ATP + H(+) = 3'-dephospho-CoA + diphosphate. It participates in cofactor biosynthesis; coenzyme A biosynthesis. Reversibly transfers an adenylyl group from ATP to 4'-phosphopantetheine, yielding dephospho-CoA (dPCoA) and pyrophosphate. The sequence is that of Phosphopantetheine adenylyltransferase from Methanosarcina barkeri (strain Fusaro / DSM 804).